A 178-amino-acid chain; its full sequence is Crossover junction endodeoxyribonuclease RuvC (178 aa).

Active-site residues include D14, E73, and D145. 3 residues coordinate Mg(2+): D14, E73, and D145.

It belongs to the RuvC family. Homodimer which binds Holliday junction (HJ) DNA. The HJ becomes 2-fold symmetrical on binding to RuvC with unstacked arms; it has a different conformation from HJ DNA in complex with RuvA. In the full resolvosome a probable DNA-RuvA(4)-RuvB(12)-RuvC(2) complex forms which resolves the HJ. It depends on Mg(2+) as a cofactor.

It is found in the cytoplasm. The enzyme catalyses Endonucleolytic cleavage at a junction such as a reciprocal single-stranded crossover between two homologous DNA duplexes (Holliday junction).. In terms of biological role, the RuvA-RuvB-RuvC complex processes Holliday junction (HJ) DNA during genetic recombination and DNA repair. Endonuclease that resolves HJ intermediates. Cleaves cruciform DNA by making single-stranded nicks across the HJ at symmetrical positions within the homologous arms, yielding a 5'-phosphate and a 3'-hydroxyl group; requires a central core of homology in the junction. The consensus cleavage sequence is 5'-(A/T)TT(C/G)-3'. Cleavage occurs on the 3'-side of the TT dinucleotide at the point of strand exchange. HJ branch migration catalyzed by RuvA-RuvB allows RuvC to scan DNA until it finds its consensus sequence, where it cleaves and resolves the cruciform DNA. The sequence is that of Crossover junction endodeoxyribonuclease RuvC from Nitrosomonas eutropha (strain DSM 101675 / C91 / Nm57).